A 54-amino-acid chain; its full sequence is UPF0391 membrane protein R00741 (54 aa).

2 helical membrane passes run alanine 5–glycine 25 and isoleucine 30–leucine 50.

This sequence belongs to the UPF0391 family.

Its subcellular location is the cell membrane. The polypeptide is UPF0391 membrane protein R00741 (Rhizobium meliloti (strain 1021) (Ensifer meliloti)).